Reading from the N-terminus, the 158-residue chain is ATP synthase subunit b', chloroplastic (158 aa).

Residues 21–41 traverse the membrane as a helical segment; that stretch reads GTLPLMALQFLILMLLLNTIF.

It belongs to the ATPase B chain family. In terms of assembly, F-type ATPases have 2 components, F(1) - the catalytic core - and F(0) - the membrane proton channel. F(1) has five subunits: alpha(3), beta(3), gamma(1), delta(1), epsilon(1). F(0) has four main subunits: a(1), b(1), b'(1) and c(10-14). The alpha and beta chains form an alternating ring which encloses part of the gamma chain. F(1) is attached to F(0) by a central stalk formed by the gamma and epsilon chains, while a peripheral stalk is formed by the delta, b and b' chains.

The protein localises to the plastid. It localises to the chloroplast thylakoid membrane. In terms of biological role, f(1)F(0) ATP synthase produces ATP from ADP in the presence of a proton or sodium gradient. F-type ATPases consist of two structural domains, F(1) containing the extramembraneous catalytic core and F(0) containing the membrane proton channel, linked together by a central stalk and a peripheral stalk. During catalysis, ATP synthesis in the catalytic domain of F(1) is coupled via a rotary mechanism of the central stalk subunits to proton translocation. Its function is as follows. Component of the F(0) channel, it forms part of the peripheral stalk, linking F(1) to F(0). The b'-subunit is a diverged and duplicated form of b found in plants and photosynthetic bacteria. In Porphyra purpurea (Red seaweed), this protein is ATP synthase subunit b', chloroplastic.